The primary structure comprises 174 residues: Gamma-crystallin F (174 aa).

2 Beta/gamma crystallin 'Greek key' domains span residues 2–40 (GKIT…RVDS) and 41–83 (GCWM…HLIP). Residues 84–87 (HSSS) are connecting peptide. 2 consecutive Beta/gamma crystallin 'Greek key' domains span residues 88 to 128 (HRIR…HVIE) and 129 to 171 (GYWV…RRIM).

It belongs to the beta/gamma-crystallin family.

Functionally, crystallins are the dominant structural components of the vertebrate eye lens. This Rattus norvegicus (Rat) protein is Gamma-crystallin F (Crygf).